Here is a 355-residue protein sequence, read N- to C-terminus: Methylthioribose-1-phosphate isomerase (355 aa).

Residues 53–55 (RGA), Arg-96, and Gln-205 each bind substrate. The Proton donor role is filled by Asp-246. Position 256–257 (256–257 (NK)) interacts with substrate.

Belongs to the eIF-2B alpha/beta/delta subunits family. MtnA subfamily.

It catalyses the reaction 5-(methylsulfanyl)-alpha-D-ribose 1-phosphate = 5-(methylsulfanyl)-D-ribulose 1-phosphate. The protein operates within amino-acid biosynthesis; L-methionine biosynthesis via salvage pathway; L-methionine from S-methyl-5-thio-alpha-D-ribose 1-phosphate: step 1/6. Its function is as follows. Catalyzes the interconversion of methylthioribose-1-phosphate (MTR-1-P) into methylthioribulose-1-phosphate (MTRu-1-P). This Thermosynechococcus vestitus (strain NIES-2133 / IAM M-273 / BP-1) protein is Methylthioribose-1-phosphate isomerase.